A 443-amino-acid chain; its full sequence is UDP-N-acetylmuramate--L-alanine ligase (443 aa).

Residue 110-116 coordinates ATP; that stretch reads GAHGKTS.

The protein belongs to the MurCDEF family.

It localises to the cytoplasm. It catalyses the reaction UDP-N-acetyl-alpha-D-muramate + L-alanine + ATP = UDP-N-acetyl-alpha-D-muramoyl-L-alanine + ADP + phosphate + H(+). It functions in the pathway cell wall biogenesis; peptidoglycan biosynthesis. Its function is as follows. Cell wall formation. The protein is UDP-N-acetylmuramate--L-alanine ligase of Lactococcus lactis subsp. lactis (strain IL1403) (Streptococcus lactis).